Reading from the N-terminus, the 151-residue chain is Small ribosomal subunit protein uS15 (151 aa).

The protein belongs to the universal ribosomal protein uS15 family.

The polypeptide is Small ribosomal subunit protein uS15 (RPS13) (Ciona intestinalis (Transparent sea squirt)).